We begin with the raw amino-acid sequence, 361 residues long: Chorismate synthase (361 aa).

R48 provides a ligand contact to NADP(+). Residues 126–128 (RFS), G286, 301–305 (KPTPS), and R328 contribute to the FMN site.

It belongs to the chorismate synthase family. Requires FMNH2 as cofactor.

It carries out the reaction 5-O-(1-carboxyvinyl)-3-phosphoshikimate = chorismate + phosphate. It participates in metabolic intermediate biosynthesis; chorismate biosynthesis; chorismate from D-erythrose 4-phosphate and phosphoenolpyruvate: step 7/7. Functionally, catalyzes the anti-1,4-elimination of the C-3 phosphate and the C-6 proR hydrogen from 5-enolpyruvylshikimate-3-phosphate (EPSP) to yield chorismate, which is the branch point compound that serves as the starting substrate for the three terminal pathways of aromatic amino acid biosynthesis. This reaction introduces a second double bond into the aromatic ring system. The sequence is that of Chorismate synthase from Korarchaeum cryptofilum (strain OPF8).